A 368-amino-acid polypeptide reads, in one-letter code: UDP-N-acetylglucosamine--N-acetylmuramyl-(pentapeptide) pyrophosphoryl-undecaprenol N-acetylglucosamine transferase (368 aa).

Residues 10-12 (TGG), asparagine 126, serine 200, isoleucine 255, and glutamine 300 contribute to the UDP-N-acetyl-alpha-D-glucosamine site.

This sequence belongs to the glycosyltransferase 28 family. MurG subfamily.

It localises to the cell membrane. It carries out the reaction Mur2Ac(oyl-L-Ala-gamma-D-Glu-L-Lys-D-Ala-D-Ala)-di-trans,octa-cis-undecaprenyl diphosphate + UDP-N-acetyl-alpha-D-glucosamine = beta-D-GlcNAc-(1-&gt;4)-Mur2Ac(oyl-L-Ala-gamma-D-Glu-L-Lys-D-Ala-D-Ala)-di-trans,octa-cis-undecaprenyl diphosphate + UDP + H(+). It participates in cell wall biogenesis; peptidoglycan biosynthesis. Its function is as follows. Cell wall formation. Catalyzes the transfer of a GlcNAc subunit on undecaprenyl-pyrophosphoryl-MurNAc-pentapeptide (lipid intermediate I) to form undecaprenyl-pyrophosphoryl-MurNAc-(pentapeptide)GlcNAc (lipid intermediate II). The chain is UDP-N-acetylglucosamine--N-acetylmuramyl-(pentapeptide) pyrophosphoryl-undecaprenol N-acetylglucosamine transferase from Lactobacillus acidophilus (strain ATCC 700396 / NCK56 / N2 / NCFM).